The following is a 403-amino-acid chain: Phosphopentomutase (403 aa).

Mn(2+)-binding residues include Asp13, Asp298, His303, Asp339, His340, and His351.

Belongs to the phosphopentomutase family. Mn(2+) serves as cofactor.

It localises to the cytoplasm. It catalyses the reaction 2-deoxy-alpha-D-ribose 1-phosphate = 2-deoxy-D-ribose 5-phosphate. The catalysed reaction is alpha-D-ribose 1-phosphate = D-ribose 5-phosphate. It functions in the pathway carbohydrate degradation; 2-deoxy-D-ribose 1-phosphate degradation; D-glyceraldehyde 3-phosphate and acetaldehyde from 2-deoxy-alpha-D-ribose 1-phosphate: step 1/2. In terms of biological role, isomerase that catalyzes the conversion of deoxy-ribose 1-phosphate (dRib-1-P) and ribose 1-phosphate (Rib-1-P) to deoxy-ribose 5-phosphate (dRib-5-P) and ribose 5-phosphate (Rib-5-P), respectively. The sequence is that of Phosphopentomutase from Streptococcus pneumoniae serotype 2 (strain D39 / NCTC 7466).